Here is a 449-residue protein sequence, read N- to C-terminus: Bifunctional protein GlmU (449 aa).

The tract at residues 1–230 (MASSKLAVIV…EAELLGVNAR (230 aa)) is pyrophosphorylase. Residues 11–14 (LAAG), lysine 25, glutamine 74, 79–80 (GT), 102–104 (YGD), glycine 142, glutamate 156, asparagine 171, and asparagine 228 each bind UDP-N-acetyl-alpha-D-glucosamine. A Mg(2+)-binding site is contributed by aspartate 104. A Mg(2+)-binding site is contributed by asparagine 228. Positions 231–251 (SELAVAEALVQARLREAAMDN) are linker. The segment at 252–449 (GATLIDPATV…QQAAKKAKKD (198 aa)) is N-acetyltransferase. Residues arginine 317 and lysine 335 each coordinate UDP-N-acetyl-alpha-D-glucosamine. The active-site Proton acceptor is histidine 347. Tyrosine 350 and asparagine 361 together coordinate UDP-N-acetyl-alpha-D-glucosamine. Residues alanine 364, 370–371 (NY), serine 389, alanine 407, and arginine 424 contribute to the acetyl-CoA site.

This sequence in the N-terminal section; belongs to the N-acetylglucosamine-1-phosphate uridyltransferase family. The protein in the C-terminal section; belongs to the transferase hexapeptide repeat family. Homotrimer. Requires Mg(2+) as cofactor.

The protein localises to the cytoplasm. The enzyme catalyses alpha-D-glucosamine 1-phosphate + acetyl-CoA = N-acetyl-alpha-D-glucosamine 1-phosphate + CoA + H(+). It catalyses the reaction N-acetyl-alpha-D-glucosamine 1-phosphate + UTP + H(+) = UDP-N-acetyl-alpha-D-glucosamine + diphosphate. It functions in the pathway nucleotide-sugar biosynthesis; UDP-N-acetyl-alpha-D-glucosamine biosynthesis; N-acetyl-alpha-D-glucosamine 1-phosphate from alpha-D-glucosamine 6-phosphate (route II): step 2/2. The protein operates within nucleotide-sugar biosynthesis; UDP-N-acetyl-alpha-D-glucosamine biosynthesis; UDP-N-acetyl-alpha-D-glucosamine from N-acetyl-alpha-D-glucosamine 1-phosphate: step 1/1. It participates in bacterial outer membrane biogenesis; LPS lipid A biosynthesis. Functionally, catalyzes the last two sequential reactions in the de novo biosynthetic pathway for UDP-N-acetylglucosamine (UDP-GlcNAc). The C-terminal domain catalyzes the transfer of acetyl group from acetyl coenzyme A to glucosamine-1-phosphate (GlcN-1-P) to produce N-acetylglucosamine-1-phosphate (GlcNAc-1-P), which is converted into UDP-GlcNAc by the transfer of uridine 5-monophosphate (from uridine 5-triphosphate), a reaction catalyzed by the N-terminal domain. The polypeptide is Bifunctional protein GlmU (Paramagnetospirillum magneticum (strain ATCC 700264 / AMB-1) (Magnetospirillum magneticum)).